A 928-amino-acid polypeptide reads, in one-letter code: Diacylglycerol kinase zeta (928 aa).

The segment covering 1–14 (MEPRDGSPEARSSD) has biased composition (basic and acidic residues). Disordered regions lie at residues 1-46 (MEPR…RRFP) and 59-82 (KSGL…SERQ). Residues 15-24 (SESASASSSG) show a composition bias toward low complexity. Basic and acidic residues predominate over residues 25-37 (SERDAGPEPDKAP). 2 Phorbol-ester/DAG-type zinc fingers span residues 98–152 (HIWF…NFRC) and 172–230 (HHWV…EEPC). The interval 251 to 280 (PQNTLKASKKKKRASFKRKSSKKGPEEGRW) is disordered. Basic residues predominate over residues 257 to 272 (ASKKKKRASFKRKSSK). Positions 259-273 (KKKKRASFKRKSSKK) are MARCKS homology. Residues 278–416 (GRWRPFIIRP…HVEEGNVVQL (139 aa)) are mediates interaction with RASGRP1. Residues 291–425 (PLMKPLLVFV…LDRWDLHAEP (135 aa)) enclose the DAGKc domain. The short motif at 361–369 (LSTLDQLRL) is the Nuclear export signal element. Phosphoserine is present on S705. A disordered region spans residues 759 to 788 (ARPDLPTPTSPLPTSPCSPTPRSLQGDAAP). A compositionally biased stretch (pro residues) spans 763 to 777 (LPTPTSPLPTSPCSP). At S781 the chain carries Phosphoserine. ANK repeat units lie at residues 822–852 (QSRT…EILD) and 857–886 (NGET…SLMK). A PDZ-binding motif is present at residues 924–928 (QETAV).

Belongs to the eukaryotic diacylglycerol kinase family. In terms of assembly, interacts (via PDZ-binding motif) with the PDZ domain of the syntrophin SNTG1 and that of SNX27. Interacts with IRS1 in the absence of insulin; insulin stimulation decreases this interaction. Found in a ternary complex with IRS1 and PIP5K1A in the absence of insulin. Interacts with PIP5K1A. As to quaternary structure, forms a signaling complex with RASGRP1 and HRAS. In terms of processing, phosphorylation of the MARCKS homology domain by PKC reduces nuclear accumulation of DGK-zeta. As to expression, highest levels in brain, and substantial levels in skeletal muscle, heart, and pancreas. Predominantly expressed in muscle.

It is found in the nucleus. Its subcellular location is the cytoplasm. The protein localises to the cytosol. It localises to the cell membrane. The protein resides in the cell projection. It is found in the lamellipodium. The catalysed reaction is a 1,2-diacyl-sn-glycerol + ATP = a 1,2-diacyl-sn-glycero-3-phosphate + ADP + H(+). It catalyses the reaction a 1-O-alkyl-sn-glycerol + ATP = a 1-O-alkyl-sn-glycero-3-phosphate + ADP + H(+). The enzyme catalyses 1-O-alkyl-2-acyl-sn-glycerol + ATP = 1-O-alkyl-2-acyl-sn-glycero-3-phosphate + ADP + H(+). It carries out the reaction 1,2-didecanoyl-sn-glycerol + ATP = 1,2-didecanoyl-sn-glycero-3-phosphate + ADP + H(+). The catalysed reaction is 1,2-ditetradecanoyl-sn-glycerol + ATP = 1,2-ditetradecanoyl-sn-glycero-3-phosphate + ADP + H(+). It catalyses the reaction 1-hexadecanoyl-2-(9Z-octadecenoyl)-sn-glycerol + ATP = 1-hexadecanoyl-2-(9Z-octadecenoyl)-sn-glycero-3-phosphate + ADP + H(+). The enzyme catalyses 1-hexadecanoyl-2-(5Z,8Z,11Z,14Z-eicosatetraenoyl)-sn-glycerol + ATP = 1-hexadecanoyl-2-(5Z,8Z,11Z,14Z-eicosatetraenoyl)-sn-glycero-3-phosphate + ADP + H(+). It carries out the reaction 1-octadecanoyl-2-(9Z-octadecenoyl)-sn-glycerol + ATP = 1-octadecanoyl-2-(9Z-octadecenoyl)-sn-glycero-3-phosphate + ADP + H(+). The catalysed reaction is 1-octadecanoyl-2-(5Z,8Z,11Z,14Z-eicosatetraenoyl)-sn-glycerol + ATP = 1-octadecanoyl-2-(5Z,8Z,11Z,14Z-eicosatetraenoyl)-sn-glycero-3-phosphate + ADP + H(+). It catalyses the reaction 1-octadecanoyl-2-(4Z,7Z,10Z,13Z,16Z,19Z-docosahexaenoyl)-sn-glycerol + ATP = 1-octadecanoyl-2-(4Z,7Z,10Z,13Z,16Z,19Z-docosahexaenoyl)-sn-glycero-3-phosphate + ADP + H(+). The enzyme catalyses 1,2-di-(9Z-octadecenoyl)-sn-glycerol + ATP = 1,2-di-(9Z-octadecenoyl)-sn-glycero-3-phosphate + ADP + H(+). It carries out the reaction 1-(9Z-octadecenoyl)-2-hexadecanoyl-sn-glycerol + ATP = 1-(9Z)-octadecenoyl-2-hexadecanoyl-sn-glycero-3-phosphate + ADP + H(+). The catalysed reaction is 1-eicosanoyl-2-(5Z,8Z,11Z,14Z)-eicosatetraenoyl-sn-glycerol + ATP = 1-eicosanoyl-2-(5Z,8Z,11Z,14Z)-eicosatetraenoyl-sn-glycero-3-phosphate + ADP + H(+). It catalyses the reaction 1,2-di-(5Z,8Z,11Z,14Z)-eicosatetraenoyl-sn-glycerol + ATP = 1,2-di-(5Z,8Z,11Z,14Z)-eicosatetraenoyl-sn-glycero-3-phosphate + ADP + H(+). The enzyme catalyses 1-O-hexadecyl-2-acetyl-sn-glycerol + ATP = 1-O-hexadecyl-2-acetyl-sn-glycero-3-phosphate + ADP + H(+). It carries out the reaction 1-O-hexadecyl-2-(5Z,8Z,11Z,14Z-eicosatetraenoyl)-sn-glycerol + ATP = 1-O-hexadecyl-2-(5Z,8Z,11Z,14Z-eicosatetraenoyl)-sn-glycero-3-phosphate + ADP + H(+). The catalysed reaction is 1-O-hexadecyl-2-(9Z-octadecenoyl)-sn-glycerol + ATP = 1-O-hexadecyl-2-(9Z-octadecenoyl)-sn-glycero-3-phosphate + ADP + H(+). It catalyses the reaction 1-O-hexadecyl-sn-glycerol + ATP = 1-O-hexadecyl-sn-glycero-3-phosphate + ADP + H(+). It participates in lipid metabolism; glycerolipid metabolism. With respect to regulation, activated by 1,2-diacyl-sn-glycero-3-phosphate/phosphatidic acid irrespective of its acyl chain composition. Functionally, diacylglycerol kinase that converts diacylglycerol/DAG into phosphatidic acid/phosphatidate/PA and regulates the respective levels of these two bioactive lipids. Thereby, acts as a central switch between the signaling pathways activated by these second messengers with different cellular targets and opposite effects in numerous biological processes. Also plays an important role in the biosynthesis of complex lipids. Does not exhibit an acyl chain-dependent substrate specificity among diacylglycerol species. Can also phosphorylate 1-alkyl-2-acylglycerol in vitro but less efficiently and with a preference for alkylacylglycerols containing an arachidonoyl group. The biological processes it is involved in include T cell activation since it negatively regulates T-cell receptor signaling which is in part mediated by diacylglycerol. By generating phosphatidic acid, stimulates PIP5KIA activity which regulates actin polymerization. Through the same mechanism could also positively regulate insulin-induced translocation of SLC2A4 to the cell membrane. In terms of biological role, regulates RASGRP1 activity. Does not regulate RASGRP1 activity. The polypeptide is Diacylglycerol kinase zeta (Homo sapiens (Human)).